Consider the following 521-residue polypeptide: Proactivator polypeptide-like 1 (521 aa).

An N-terminal signal peptide occupies residues 1–17 (MLCALLLLPSLLGATRA). Residues 18–59 (SPTSGPQECAKGSTVWCQDLQTAARCGAVGYCQGAVWNKPTA) constitute a propeptide that is removed on maturation. The 41-residue stretch at 19–59 (PTSGPQECAKGSTVWCQDLQTAARCGAVGYCQGAVWNKPTA) folds into the Saposin A-type 1 domain. Saposin B-type domains follow at residues 60–144 (KSLP…EPLQ) and 180–258 (EGAL…EELG). 3 cysteine pairs are disulfide-bonded: cysteine 64–cysteine 140, cysteine 67–cysteine 134, and cysteine 95–cysteine 107. Residues 146–180 (HLATLRPLSKEDTFEAVAPFMANGPLTFHPRQAPE) constitute a propeptide that is removed on maturation. Disulfide bonds link cysteine 184/cysteine 254, cysteine 187/cysteine 248, and cysteine 213/cysteine 224. N-linked (GlcNAc...) asparagine glycosylation is present at asparagine 201. Residues 259 to 288 (APARLTQVVAMDGVPSLELGLPRKQSEMQM) constitute a propeptide that is removed on maturation. Saposin B-type domains are found at residues 290–370 (AGVT…GNRR) and 392–473 (QGSF…HGPR). Intrachain disulfides connect cysteine 294–cysteine 366, cysteine 297–cysteine 360, and cysteine 325–cysteine 336. Residue asparagine 311 is glycosylated (N-linked (GlcNAc...) asparagine). Positions 370–391 (RRARAVHDAYAIVPSPEWDAEN) are excised as a propeptide. Disulfide bonds link cysteine 396–cysteine 469, cysteine 399–cysteine 463, and cysteine 427–cysteine 438. Positions 474-521 (TPLLGTDQCALGPSFWCRSQEAAKLCNAVQHCQKHVWKEMHLHAGEHA) are excised as a propeptide. The region spanning 475–515 (PLLGTDQCALGPSFWCRSQEAAKLCNAVQHCQKHVWKEMHL) is the Saposin A-type 2 domain.

The protein resides in the secreted. In terms of biological role, may activate the lysosomal degradation of sphingolipids. This is Proactivator polypeptide-like 1 (PSAPL1) from Homo sapiens (Human).